The chain runs to 208 residues: dTTP/UTP pyrophosphatase (208 aa).

A disordered region spans residues 28-48 (DRIHPADIDETPQRAEHPRSL). The active-site Proton acceptor is D79.

It belongs to the Maf family. YhdE subfamily. A divalent metal cation is required as a cofactor.

The protein resides in the cytoplasm. It catalyses the reaction dTTP + H2O = dTMP + diphosphate + H(+). The catalysed reaction is UTP + H2O = UMP + diphosphate + H(+). Its function is as follows. Nucleoside triphosphate pyrophosphatase that hydrolyzes dTTP and UTP. May have a dual role in cell division arrest and in preventing the incorporation of modified nucleotides into cellular nucleic acids. This Brucella abortus (strain 2308) protein is dTTP/UTP pyrophosphatase.